Consider the following 108-residue polypeptide: UPF0060 membrane protein DSY4629 (108 aa).

A run of 4 helical transmembrane segments spans residues I5–W25, P31–L51, V60–D80, and N86–P106.

Belongs to the UPF0060 family.

The protein localises to the cell membrane. The protein is UPF0060 membrane protein DSY4629 of Desulfitobacterium hafniense (strain Y51).